We begin with the raw amino-acid sequence, 164 residues long: Large ribosomal subunit protein uL11 (164 aa).

The protein belongs to the universal ribosomal protein uL11 family. As to quaternary structure, part of the ribosomal stalk of the 50S ribosomal subunit. Interacts with L10 and the large rRNA to form the base of the stalk. L10 forms an elongated spine to which L12 dimers bind in a sequential fashion forming a multimeric L10(L12)X complex.

Functionally, forms part of the ribosomal stalk which helps the ribosome interact with GTP-bound translation factors. The polypeptide is Large ribosomal subunit protein uL11 (Pyrococcus horikoshii (strain ATCC 700860 / DSM 12428 / JCM 9974 / NBRC 100139 / OT-3)).